The chain runs to 260 residues: Carbonic anhydrase 2 (260 aa).

The residue at position 2 (Ser2) is an N-acetylserine. Ser2 is subject to Phosphoserine. The 257-residue stretch at 3–259 folds into the Alpha-carbonic anhydrase domain; the sequence is HHWGYSKHNG…LKNRKIKASF (257 aa). The active-site Proton acceptor is His64. Asn67 is a catalytic residue. Position 87 is a phosphoserine (Ser87). The Zn(2+) site is built by His94, His96, and His119. Residue Tyr127 is part of the active site. A Phosphoserine modification is found at Ser165. 198–199 is a substrate binding site; that stretch reads TT.

This sequence belongs to the alpha-carbonic anhydrase family. In terms of assembly, interacts with SLC4A4. Interaction with SLC4A7 regulates SLC4A7 transporter activity. Interacts with SLC26A6. It depends on Zn(2+) as a cofactor.

Its subcellular location is the cytoplasm. The protein localises to the cell membrane. It carries out the reaction hydrogencarbonate + H(+) = CO2 + H2O. The enzyme catalyses urea = cyanamide + H2O. Its activity is regulated as follows. Inhibited by acetazolamide. In terms of biological role, catalyzes the reversible hydration of carbon dioxide. Can also hydrate cyanamide to urea. Involved in the regulation of fluid secretion into the anterior chamber of the eye. Essential for bone resorption and osteoclast differentiation. Contributes to intracellular pH regulation in the duodenal upper villous epithelium during proton-coupled peptide absorption. Stimulates the chloride-bicarbonate exchange activity of SLC26A6. In Mus musculus (Mouse), this protein is Carbonic anhydrase 2 (Ca2).